Reading from the N-terminus, the 158-residue chain is Transcription factor BTF3 homolog 4 (158 aa).

One can recognise an NAC-A/B domain in the interval 33-98 (TADDKKLQSS…AEVKQITEML (66 aa)). The disordered stretch occupies residues 123-158 (QVLDSKASKPEDIEEEDDDVPELVGNFDEASKNEAN). The span at 134–143 (DIEEEDDDVP) shows a compositional bias: acidic residues.

Belongs to the NAC-beta family.

This Xenopus laevis (African clawed frog) protein is Transcription factor BTF3 homolog 4 (btf3l4).